We begin with the raw amino-acid sequence, 361 residues long: Biotin synthase (361 aa).

One can recognise a Radical SAM core domain in the interval 63–290; sequence NTVQLSTLLS…RAMVRLSAGR (228 aa). [4Fe-4S] cluster is bound by residues C78, C82, and C85. The [2Fe-2S] cluster site is built by C122, C153, C213, and R285.

The protein belongs to the radical SAM superfamily. Biotin synthase family. In terms of assembly, homodimer. [4Fe-4S] cluster serves as cofactor. [2Fe-2S] cluster is required as a cofactor.

It carries out the reaction (4R,5S)-dethiobiotin + (sulfur carrier)-SH + 2 reduced [2Fe-2S]-[ferredoxin] + 2 S-adenosyl-L-methionine = (sulfur carrier)-H + biotin + 2 5'-deoxyadenosine + 2 L-methionine + 2 oxidized [2Fe-2S]-[ferredoxin]. The protein operates within cofactor biosynthesis; biotin biosynthesis; biotin from 7,8-diaminononanoate: step 2/2. In terms of biological role, catalyzes the conversion of dethiobiotin (DTB) to biotin by the insertion of a sulfur atom into dethiobiotin via a radical-based mechanism. This is Biotin synthase from Paraburkholderia phytofirmans (strain DSM 17436 / LMG 22146 / PsJN) (Burkholderia phytofirmans).